The sequence spans 70 residues: Kappa-scoloptoxin(07)-Ssm2b (70 aa).

Positions 1 to 19 (MLVFYALLFVSVFSSTVMG) are cleaved as a signal peptide. Positions 20–39 (ATIDKPILREAIEEIDVNKR) are excised as a propeptide.

This sequence belongs to the scoloptoxin-07 family. In terms of processing, contains 3 disulfide bonds. In terms of tissue distribution, expressed by the venom gland.

Its subcellular location is the secreted. Functionally, inhibits voltage-gated potassium channels. This is Kappa-scoloptoxin(07)-Ssm2b from Scolopendra mutilans (Chinese red-headed centipede).